The primary structure comprises 268 residues: MMSDTLRAVLLGIIEGVTEFLPVSSTGHLLLAERFFGLGEDGFWKSFAILIQLGAILAIVALYFFKLSRVAIGALSNADDRRFIIGVLIAFLPAVIIGLIAGKYIKALLFDPWVVCFSLIVGGAILLWVDQIDLKPREHDATRYPLLMYLWIGVAQCLAMIPGVSRSGATIVAAMLLGGDKRSAAEFSFFLAIPTMVGAFVYDFYKSRAEMTSDHLGLVAIGFVVSFITAMIVVKAFLGYVTRHGFVLFAWWRVIVGTLGLIALALGK.

The next 7 membrane-spanning stretches (helical) occupy residues 47–67, 83–103, 109–129, 144–164, 184–204, 218–238, and 246–266; these read FAIL…FFKL, FIIG…IAGK, LFDP…LLWV, YPLL…IPGV, AAEF…VYDF, LVAI…KAFL, and FVLF…ALAL.

Belongs to the UppP family.

The protein resides in the cell inner membrane. The enzyme catalyses di-trans,octa-cis-undecaprenyl diphosphate + H2O = di-trans,octa-cis-undecaprenyl phosphate + phosphate + H(+). In terms of biological role, catalyzes the dephosphorylation of undecaprenyl diphosphate (UPP). Confers resistance to bacitracin. The chain is Undecaprenyl-diphosphatase from Bradyrhizobium sp. (strain BTAi1 / ATCC BAA-1182).